The following is a 212-amino-acid chain: Phosphatidylserine decarboxylase proenzyme (212 aa).

The active-site Schiff-base intermediate with substrate; via pyruvic acid is Ser182. Ser182 is subject to Pyruvic acid (Ser); by autocatalysis.

The protein belongs to the phosphatidylserine decarboxylase family. PSD-A subfamily. In terms of assembly, heterodimer of a large membrane-associated beta subunit and a small pyruvoyl-containing alpha subunit. Pyruvate serves as cofactor. Is synthesized initially as an inactive proenzyme. Formation of the active enzyme involves a self-maturation process in which the active site pyruvoyl group is generated from an internal serine residue via an autocatalytic post-translational modification. Two non-identical subunits are generated from the proenzyme in this reaction, and the pyruvate is formed at the N-terminus of the alpha chain, which is derived from the carboxyl end of the proenzyme. The post-translation cleavage follows an unusual pathway, termed non-hydrolytic serinolysis, in which the side chain hydroxyl group of the serine supplies its oxygen atom to form the C-terminus of the beta chain, while the remainder of the serine residue undergoes an oxidative deamination to produce ammonia and the pyruvoyl prosthetic group on the alpha chain.

It localises to the cell membrane. It catalyses the reaction a 1,2-diacyl-sn-glycero-3-phospho-L-serine + H(+) = a 1,2-diacyl-sn-glycero-3-phosphoethanolamine + CO2. The protein operates within phospholipid metabolism; phosphatidylethanolamine biosynthesis; phosphatidylethanolamine from CDP-diacylglycerol: step 2/2. Catalyzes the formation of phosphatidylethanolamine (PtdEtn) from phosphatidylserine (PtdSer). The protein is Phosphatidylserine decarboxylase proenzyme of Chlorobium phaeobacteroides (strain DSM 266 / SMG 266 / 2430).